Reading from the N-terminus, the 227-residue chain is uncharacterized protein (227 aa).

The N-terminal stretch at 1 to 23 (MKKRFSLIMMTGLLFGLTSPAFA) is a signal peptide. A VWFA domain is found at 36–227 (NVAVLLDASG…FTQQSLMLSK (192 aa)).

It to B.subtilis YwmD.

This is an uncharacterized protein from Bacillus subtilis (strain 168).